The following is a 314-amino-acid chain: Small ribosomal subunit protein RACK1 (314 aa).

Thr-10 is modified (phosphothreonine). The stretch at 13 to 44 (GHSGWVTSLSTAPENPDILLSGSRDKSIILWN) is one WD 1 repeat. At Ser-39 the chain carries Phosphoserine. Residue Tyr-52 is modified to Phosphotyrosine. WD repeat units follow at residues 61–91 (GHSHFVSDCALSFDSHYALSASWDKTIRLWD), 103–133 (GHTSDVLSVSISPDNRQVVSGSRDKTIKIWN), 146–178 (GHSDWVSCVRFSPNPDNLTFVSAGWDKAVKVWD), 190–220 (GHTGYVSAVTISPDGSLCASGGRDGTLMLWD), 231–260 (EAKANINALVFSPNRYWLCAATGSSIRIFD), and 281–311 (SSEPECISLTWSPDGQTLFSGWTDNLIRVWQ). Residue Ser-148 is modified to Phosphoserine. 2 positions are modified to phosphoserine: Ser-242 and Ser-255.

The protein belongs to the WD repeat G protein beta family. Ribosomal protein RACK1 subfamily. In terms of assembly, component of the small ribosomal subunit (SSU). Mature yeast ribosomes consist of a small (40S) and a large (60S) subunit. The 40S small subunit contains 1 molecule of ribosomal RNA (18S rRNA) and at least 33 different proteins. The large 60S subunit contains 3 rRNA molecules (25S, 5.8S and 5S rRNA) and at least 46 different proteins. RACK1 is located at the head of the SSU in the vicinity of the mRNA exit channel. RACK1 interacts with the mRNA-binding protein SCP16. RACK1 also exists simultaneously as a homodimer in a cytosolic non-ribosome-bound form. Interacts with pck2. Interacts with pat1/ran1.

It is found in the cytoplasm. The protein localises to the membrane. Component of the ribosome, a large ribonucleoprotein complex responsible for the synthesis of proteins in the cell. The small ribosomal subunit (SSU) binds messenger RNAs (mRNAs) and translates the encoded message by selecting cognate aminoacyl-transfer RNA (tRNA) molecules. The large subunit (LSU) contains the ribosomal catalytic site termed the peptidyl transferase center (PTC), which catalyzes the formation of peptide bonds, thereby polymerizing the amino acids delivered by tRNAs into a polypeptide chain. The nascent polypeptides leave the ribosome through a tunnel in the LSU and interact with protein factors that function in enzymatic processing, targeting, and the membrane insertion of nascent chains at the exit of the ribosomal tunnel. Located at the head of the 40S ribosomal subunit in the vicinity of the mRNA exit channel, RACK1 serves as a scaffold protein that can recruit other proteins to the ribosome. Involved in induction of the ribosome quality control (RQC) pathway; a pathway that degrades nascent peptide chains during problematic translation. Involved in the negative regulation of translation of a specific subset of proteins. May be a receptor for protein kinase C in the regulation of actin cytoskeleton organization during cell wall synthesis and morphogenesis. Involved in the control of G2/M transition. May function as an anchoring protein for pat1/ran1 kinase. Negatively regulates the cell integrity transduction pathway by favoring translation of the tyrosine-phosphatases pyp1 and pyp2 that deactivate pmk1. Positively regulates the synthesis of the stress-responsive transcription factor Atf1 and the cytoplasmic catalase, a detoxificant enzyme induced by treatment with hydrogen peroxide. The sequence is that of Small ribosomal subunit protein RACK1 from Schizosaccharomyces pombe (strain 972 / ATCC 24843) (Fission yeast).